We begin with the raw amino-acid sequence, 179 residues long: ATP synthase subunit b (179 aa).

Residues 26 to 46 (FLEANLFNLAILLGIIIYYAP) form a helical membrane-spanning segment.

This sequence belongs to the ATPase B chain family. F-type ATPases have 2 components, F(1) - the catalytic core - and F(0) - the membrane proton channel. F(1) has five subunits: alpha(3), beta(3), gamma(1), delta(1), epsilon(1). F(0) has four main subunits: a(1), b(1), b'(1) and c(10-14). The alpha and beta chains form an alternating ring which encloses part of the gamma chain. F(1) is attached to F(0) by a central stalk formed by the gamma and epsilon chains, while a peripheral stalk is formed by the delta, b and b' chains.

It is found in the cellular thylakoid membrane. In terms of biological role, f(1)F(0) ATP synthase produces ATP from ADP in the presence of a proton or sodium gradient. F-type ATPases consist of two structural domains, F(1) containing the extramembraneous catalytic core and F(0) containing the membrane proton channel, linked together by a central stalk and a peripheral stalk. During catalysis, ATP synthesis in the catalytic domain of F(1) is coupled via a rotary mechanism of the central stalk subunits to proton translocation. Its function is as follows. Component of the F(0) channel, it forms part of the peripheral stalk, linking F(1) to F(0). The protein is ATP synthase subunit b of Synechocystis sp. (strain ATCC 27184 / PCC 6803 / Kazusa).